The primary structure comprises 227 residues: Chloronitrobenzene nitroreductase (227 aa).

14-18 is a binding site for FMN; sequence RRTKR. Ser-44 contributes to the NADP(+) binding site. Residues 172–173 and Arg-215 contribute to the FMN site; that span reads GL.

The protein belongs to the nitroreductase family. FMN serves as cofactor.

The catalysed reaction is N-phenylhydroxylamine + 2 NADP(+) + H2O = nitrobenzene + 2 NADPH + 2 H(+). It functions in the pathway xenobiotic degradation; nitrobenzene degradation. The protein operates within xenobiotic degradation; 4-chloronitrobenzene degradation. In terms of biological role, involved in the biodegradation of chlorinated nitroaromatic compounds. Catalyzes the reduction of 4-chloronitrobenzene to yield 1-hydroxylamino-4-chlorobenzene. Probably also able to catalyze the two-electron reduction of nitrobenzene (NB) to produce a nitrosobenzene (NOB) intermediate, which is immediately reduced to hydroxylaminobenzene (HAB) by a second two-electron transfer. The chain is Chloronitrobenzene nitroreductase from Comamonas testosteroni (Pseudomonas testosteroni).